Reading from the N-terminus, the 373-residue chain is Peptide chain release factor 1-like, mitochondrial (373 aa).

A mitochondrion-targeting transit peptide spans 1–25; it reads MRSGFLSGARRLWARRAFSRTPPPS. A coiled-coil region spans residues 56-110; sequence QLAAAARLLSEKERELRDTESLLHDENEDLKKLAESEIALCQKQITELKHQIISL. The interval 229–293 is GGQ domain; the sequence is PKDLRIDTKR…LRARLYSMHL (65 aa). Positions 243-245 match the GGQ motif; sequence GGQ. Glutamine 245 carries the post-translational modification N5-methylglutamine.

The protein belongs to the prokaryotic/mitochondrial release factor family. Post-translationally, methylation of glutamine in the GGQ triplet by HEMK1 is conserved from bacteria to mammals.

Its subcellular location is the mitochondrion. Functionally, mitochondrial peptide chain release factor that directs the termination of translation in response to the peptide chain termination codons UAA and UAG. The polypeptide is Peptide chain release factor 1-like, mitochondrial (Mtrf1l) (Mus musculus (Mouse)).